The following is a 488-amino-acid chain: Beta-1,3-glucan-binding protein (488 aa).

Positions 1 to 17 (MFVTFICFLACLTCSYG) are cleaved as a signal peptide. The binds to curdlan, laminarihexaose and laminarin. The complex formation with laminarin induces self-association of the complexes into a macro structure, likely containing six protein and three laminarin molecules. The macro structures may form a platform on a microbial surface for recruitment of downstream proteases, as a means of amplification of the initial signal of pathogen recognition for the activation of the phenoloxidase cascade stretch occupies residues 18–135 (QPRAQQYVVP…GTPADTSLEP (118 aa)). The tract at residues 18–198 (QPRAQQYVVP…LKDLANWEAE (181 aa)) is binds to curdlan, lipopolysaccharide and lipoteichoic acid, activates the phenoloxidase cascade and is resistant to proteolytic degradation by trypsin or chymotrypsin, but is not as effective as the full-length protein in aggregation of microorganisms. Positions 24-123 (YVVPSAKLEA…GEWTVTEFVN (100 aa)) constitute a CBM39 domain. Residues 24 to 127 (YVVPSAKLEA…VTEFVNEDGT (104 aa)) form a binds to laminarihexaose and laminarin region. Residues Asp-72, 99-101 (WTY), and Arg-110 contribute to the substrate site. Positions 125–158 (DGTPADTSLEPTTAPTPVRPDQPNQPIPTHRPDP) are disordered. Positions 129–139 (ADTSLEPTTAP) are enriched in polar residues. Residues 141–150 (PVRPDQPNQP) are compositionally biased toward pro residues. The region spanning 144–488 (PDQPNQPIPT…KVDYVRVYAL (345 aa)) is the GH16 domain. The tract at residues 199–488 (VKFPEEPDYP…KVDYVRVYAL (290 aa)) is binds to laminarin, but not to curdlan, does not activate the phenoloxidase cascade, is susceptible to proteinase digestion by trypsin or chymotrypsin and does not cause aggregation of microorganisms. Asn-373 and Asn-453 each carry an N-linked (GlcNAc...) asparagine glycan.

Belongs to the insect beta-1,3-glucan binding protein family. In terms of assembly, monomer. The N-terminus is blocked. In terms of tissue distribution, fat body and hemolymph.

The protein resides in the secreted. In terms of biological role, involved in the recognition of invading microorganisms causing their aggregation. Activates the phenoloxidase cascade. Binds specifically to beta-1,3-glucan. Binds to curdlan, a linear water-insoluble beta-1,3-glucan polysaccharide, and to laminarin, a water-soluble beta-1,3-glucan polysaccharide containing beta-1,6 branches. Also binds to lipopolysaccharide and lipoteichoic acid. This is Beta-1,3-glucan-binding protein from Plodia interpunctella (Indianmeal moth).